A 490-amino-acid chain; its full sequence is Transcriptional activator/repressor MOT3 (490 aa).

Met-1 is subject to N-acetylmethionine. Disordered regions lie at residues 1–69 (MNAD…NKDD), 101–162 (NNNN…HPNQ), and 214–267 (NNGN…PQHH). Low complexity predominate over residues 8–36 (QQQQQQRQQHQQQQHQQQQHQHQHQQQQH). Polar residues predominate over residues 37-65 (TILQNVSNTNNIGSDSLASQPFNTTTVSS). The interval 98-295 (NNSNNNNVTA…NLNLNINPAQ (198 aa)) is prion domain (PrD). 4 stretches are compositionally biased toward low complexity: residues 119-128 (NNSNNSNNSN), 138-157 (NNST…NNNN), 214-232 (NNGN…HSAP), and 248-264 (THNN…NNAP). 2 consecutive C2H2-type zinc fingers follow at residues 346–368 (HQCQ…LLSH) and 374–397 (FLCP…KLKH). The span at 421-436 (NNNNDNNNNNNSNSAS) shows a compositional bias: low complexity. Residues 421 to 458 (NNNNDNNNNNNSNSASGSGGAGAAAAAATAPENEDGNG) form a disordered region.

Its subcellular location is the nucleus. Its function is as follows. Transcription factor that affects the expression of a large set of genes. Recognizes and binds to the consensus sequence 5'-[CAT]AGG[TC]A-3' in the promoter region. Plays a major role in the repression of a specific subset of hypoxic genes (e.g. ANB1, DAN1 and HEM13) under aerobic conditions. Acts synergistically with the transcription factor ROX1 to recruit the general repression complex SSN6-TUP1 to the promoter of hypoxic genes. Represses transcription of ergosterol biosynthetic genes. Negatively regulates pheromone-induced gene expression. Can act as a transcriptional activator (e.g. of genes like CYC1, SUC2 and the Ty long terminal repeat delta promoter). The protein is Transcriptional activator/repressor MOT3 (MOT3) of Saccharomyces cerevisiae (strain ATCC 204508 / S288c) (Baker's yeast).